Reading from the N-terminus, the 344-residue chain is Dihydroorotase (344 aa).

The Zn(2+) site is built by His-13 and His-15. Residues His-15–Arg-17 and Asn-41 contribute to the substrate site. 3 residues coordinate Zn(2+): Lys-99, His-136, and His-174. An N6-carboxylysine modification is found at Lys-99. His-136 serves as a coordination point for substrate. Residue Leu-219 participates in substrate binding. Residue Asp-247 coordinates Zn(2+). Residue Asp-247 is part of the active site. Substrate-binding residues include His-251 and Ala-263.

It belongs to the metallo-dependent hydrolases superfamily. DHOase family. Class II DHOase subfamily. In terms of assembly, homodimer. Zn(2+) is required as a cofactor.

The enzyme catalyses (S)-dihydroorotate + H2O = N-carbamoyl-L-aspartate + H(+). The protein operates within pyrimidine metabolism; UMP biosynthesis via de novo pathway; (S)-dihydroorotate from bicarbonate: step 3/3. Its function is as follows. Catalyzes the reversible cyclization of carbamoyl aspartate to dihydroorotate. This is Dihydroorotase from Idiomarina loihiensis (strain ATCC BAA-735 / DSM 15497 / L2-TR).